The following is a 954-amino-acid chain: ATPase 9, plasma membrane-type (954 aa).

Over 1 to 66 (MAGNKDSSWD…EKKENKVLKF (66 aa)) the chain is Cytoplasmic. The helical transmembrane segment at 67–86 (LGFMWNPLSWVMELAAIMAI) threads the bilayer. Residues 87-98 (ALANGGGRPPDW) are Extracellular-facing. The chain crosses the membrane as a helical span at residues 99–119 (QDFVGITVLLIINSTISFIEE). Residues 120–248 (NNAGNAAAAL…GHFQKVLTAI (129 aa)) are Cytoplasmic-facing. A helical transmembrane segment spans residues 249 to 269 (GNFCICSIAIGMLIEIVVMYP). The Extracellular segment spans residues 270–278 (IQKRAYRDG). The chain crosses the membrane as a helical span at residues 279-296 (IDNLLVLLIGGIPIAMPT). The Cytoplasmic portion of the chain corresponds to 297–648 (VLSVTMAIGS…TSRAIFQRMK (352 aa)). The 4-aspartylphosphate intermediate role is filled by Asp-334. Asp-593 and Asp-597 together coordinate Mg(2+). A helical membrane pass occupies residues 649-670 (NYTIYAVSITIRIVMGFMLLAL). The Extracellular portion of the chain corresponds to 671–675 (IWKFD). A helical membrane pass occupies residues 676-698 (FSPFMVLIVAILNDGTIMTISKD). Residues 699–714 (RVKPSPLPDSWKLKEI) lie on the Cytoplasmic side of the membrane. A helical transmembrane segment spans residues 715-735 (FATGVVLGTYLAVMTVVFFWA). Residues 736–756 (AESTDFFSAKFGVRSISGNPH) are Extracellular-facing. Residues 757 to 777 (ELTAAVYLQVSIVSQALIFVT) traverse the membrane as a helical segment. At 778–789 (RSRSWSYVERPG) the chain is on the cytoplasmic side. Residues 790 to 810 (FWLISAFFMAQLIATLIAVYA) traverse the membrane as a helical segment. Over 811–818 (NWNFARIR) the chain is Extracellular. The chain crosses the membrane as a helical span at residues 819–839 (GIGWGWAGVIWLYSIVFYIPL). The Cytoplasmic segment spans residues 840-954 (DILKFIIRYS…IEAIQQHYTL (115 aa)). A Phosphothreonine modification is found at Thr-886. Ser-936 carries the post-translational modification Phosphoserine. The interaction with 14-3-3 proteins stretch occupies residues 952-954 (YTL). Residue Thr-953 is modified to Phosphothreonine.

It belongs to the cation transport ATPase (P-type) (TC 3.A.3) family. Type IIIA subfamily. As to quaternary structure, binds to 14-3-3 proteins. The binding is induced by phosphorylation of Thr-953. Binding to 14-3-3 proteins activates the H(+)-ATPase. As to expression, anther specific. Expressed in guard cells.

Its subcellular location is the membrane. The enzyme catalyses ATP + H2O + H(+)(in) = ADP + phosphate + 2 H(+)(out). Functionally, the plasma membrane H(+) ATPase of plants and fungi generates a proton gradient that drives the active transport of nutrients by H(+)-symport. The resulting external acidification and/or internal alkinization may mediate growth responses. The polypeptide is ATPase 9, plasma membrane-type (AHA9) (Arabidopsis thaliana (Mouse-ear cress)).